Here is a 64-residue protein sequence, read N- to C-terminus: Large ribosomal subunit protein uL29 (64 aa).

It belongs to the universal ribosomal protein uL29 family.

In Teredinibacter turnerae (strain ATCC 39867 / T7901), this protein is Large ribosomal subunit protein uL29.